Consider the following 37-residue polypeptide: Large ribosomal subunit protein bL36 (37 aa).

It belongs to the bacterial ribosomal protein bL36 family.

The protein is Large ribosomal subunit protein bL36 of Vesicomyosocius okutanii subsp. Calyptogena okutanii (strain HA).